Consider the following 804-residue polypeptide: Probable protein phosphatase 2C 18 (804 aa).

Residues 19–39 (DASGPVLFWCVLIIFAVPDAI) form a helical membrane-spanning segment. The PPM-type phosphatase domain maps to 129 to 434 (KYIVSSMQGL…ENTTVILVQF (306 aa)). The Mn(2+) site is built by Asp165, Gly166, Gln384, and Glu425. Disordered stretches follow at residues 460-509 (STSA…GGSA), 564-599 (DEVELDPNFRPKPQVRRAHDGPSPTPSEIEADLNAS), 623-653 (PLQGHDVSSTSTNPNTATDTGSGSRTGDDDV), and 675-804 (VDST…EGSP). Residues 468–499 (GSDSDTSATSDEGVDDTATAGTTTTGYEAGSS) are compositionally biased toward low complexity. Positions 628–637 (DVSSTSTNPN) are enriched in polar residues. Residues 638-647 (TATDTGSGSR) are compositionally biased toward low complexity. The segment covering 713–734 (LVNNDTTVADNNASGVADSTTV) has biased composition (polar residues). Residues 776–789 (DATATATASASAAV) are compositionally biased toward low complexity. The segment covering 790–804 (ADDEGTAPDDSEGSP) has biased composition (acidic residues).

Belongs to the PP2C family. Requires Mg(2+) as cofactor. It depends on Mn(2+) as a cofactor.

It localises to the membrane. The enzyme catalyses O-phospho-L-seryl-[protein] + H2O = L-seryl-[protein] + phosphate. It carries out the reaction O-phospho-L-threonyl-[protein] + H2O = L-threonyl-[protein] + phosphate. The chain is Probable protein phosphatase 2C 18 from Oryza sativa subsp. japonica (Rice).